A 305-amino-acid polypeptide reads, in one-letter code: uncharacterized protein (305 aa).

The next 3 helical transmembrane spans lie at 52 to 72 (TINL…SKII), 89 to 109 (IAGF…FIAA), and 120 to 140 (VIAI…GSLS).

The protein belongs to the MscS (TC 1.A.23) family.

It is found in the cell membrane. This is an uncharacterized protein from Buchnera aphidicola subsp. Acyrthosiphon pisum (strain APS) (Acyrthosiphon pisum symbiotic bacterium).